The primary structure comprises 242 residues: NAD-dependent protein deacylase 1 (242 aa).

A Deacetylase sirtuin-type domain is found at 1 to 242 (MDFKILKEKL…FAMKFEEKEG (242 aa)). 21–40 (GAGISKESGIPTFRGEDGLW) serves as a coordination point for NAD(+). Residues tyrosine 65 and arginine 68 each contribute to the substrate site. Residue 99–102 (QNVD) participates in NAD(+) binding. The active-site Proton acceptor is histidine 117. Residues cysteine 125, cysteine 128, cysteine 146, and cysteine 149 each coordinate Zn(2+). NAD(+)-binding positions include 186-188 (GTS) and glutamate 241.

Belongs to the sirtuin family. Class III subfamily. Requires Zn(2+) as cofactor.

It is found in the cytoplasm. It catalyses the reaction N(6)-acetyl-L-lysyl-[protein] + NAD(+) + H2O = 2''-O-acetyl-ADP-D-ribose + nicotinamide + L-lysyl-[protein]. The catalysed reaction is N(6)-succinyl-L-lysyl-[protein] + NAD(+) + H2O = 2''-O-succinyl-ADP-D-ribose + nicotinamide + L-lysyl-[protein]. NAD-dependent lysine deacetylase and desuccinylase that specifically removes acetyl and succinyl groups on target proteins. Modulates the activities of several proteins which are inactive in their acylated form. The chain is NAD-dependent protein deacylase 1 from Caldanaerobacter subterraneus subsp. tengcongensis (strain DSM 15242 / JCM 11007 / NBRC 100824 / MB4) (Thermoanaerobacter tengcongensis).